Consider the following 326-residue polypeptide: MQTALLKPKIIAVEPLGDHHAKVVMEPFERGYGHTLGNALRRVLLSSMVGYAPTEVTIAGVVHEYSTIDGVQEDVVNLLLNLKGVVFKLHNRDEVTVSLRKDGEGVVTAADIELPHDVEIINPGHVIAHLSAGGKLDMQIKVEQGRGYVPGNVRKFGDEASKVIGRIVLDASFSPVRRVSYAVESARVEQRTDLDKLVMNIETDGVISPEEAIRQSARILVDQLSVFAALEGTESAAEAASSRAPQIDPILLRPVDDLELTVRSANCLKAENIYYIGDLIQRTENELLKTPNLGRKSLNEIKEVLASRGLTLGMKLENWPPAGLEK.

The alpha N-terminal domain (alpha-NTD) stretch occupies residues 1-231; sequence MQTALLKPKI…DQLSVFAALE (231 aa). The alpha C-terminal domain (alpha-CTD) stretch occupies residues 247-326; it reads IDPILLRPVD…ENWPPAGLEK (80 aa).

Belongs to the RNA polymerase alpha chain family. As to quaternary structure, homodimer. The RNAP catalytic core consists of 2 alpha, 1 beta, 1 beta' and 1 omega subunit. When a sigma factor is associated with the core the holoenzyme is formed, which can initiate transcription.

It carries out the reaction RNA(n) + a ribonucleoside 5'-triphosphate = RNA(n+1) + diphosphate. Its function is as follows. DNA-dependent RNA polymerase catalyzes the transcription of DNA into RNA using the four ribonucleoside triphosphates as substrates. The protein is DNA-directed RNA polymerase subunit alpha of Cupriavidus metallidurans (strain ATCC 43123 / DSM 2839 / NBRC 102507 / CH34) (Ralstonia metallidurans).